We begin with the raw amino-acid sequence, 114 residues long: uncharacterized protein (114 aa).

The protein to E.coli YfiI and P.aeruginosa RluD.

This is an uncharacterized protein from Escherichia coli O6:H1 (strain CFT073 / ATCC 700928 / UPEC).